A 293-amino-acid chain; its full sequence is Phosphoribosylaminoimidazole-succinocarboxamide synthase (293 aa).

It belongs to the SAICAR synthetase family.

The catalysed reaction is 5-amino-1-(5-phospho-D-ribosyl)imidazole-4-carboxylate + L-aspartate + ATP = (2S)-2-[5-amino-1-(5-phospho-beta-D-ribosyl)imidazole-4-carboxamido]succinate + ADP + phosphate + 2 H(+). It participates in purine metabolism; IMP biosynthesis via de novo pathway; 5-amino-1-(5-phospho-D-ribosyl)imidazole-4-carboxamide from 5-amino-1-(5-phospho-D-ribosyl)imidazole-4-carboxylate: step 1/2. This chain is Phosphoribosylaminoimidazole-succinocarboxamide synthase, found in Desulfosudis oleivorans (strain DSM 6200 / JCM 39069 / Hxd3) (Desulfococcus oleovorans).